The primary structure comprises 141 residues: MSNITIYHNPHCGTSRNTLEMIRNSGIEPTVILYLETPPSRDELLKLIADMGISVRALLRKNVEPYEELGLAEDKFTDDQLIDFMLQHPILINRPIVVTPLGTKLCRPSEVVLDILPDAQKAAFTKEDGEKVVDDSGKRLK.

Cysteine 12 serves as the catalytic Nucleophile; cysteine thioarsenate intermediate.

Belongs to the ArsC family.

It carries out the reaction [glutaredoxin]-dithiol + arsenate + glutathione + H(+) = glutathionyl-S-S-[glutaredoxin] + arsenite + H2O. Functionally, involved in resistance to arsenate. Catalyzes the reduction of arsenate [As(V)] to arsenite [As(III)]. The protein is Arsenate reductase of Escherichia coli.